The sequence spans 132 residues: Phosphoribosyl-AMP cyclohydrolase (132 aa).

Asp-89 contributes to the Mg(2+) binding site. A Zn(2+)-binding site is contributed by Cys-90. Mg(2+)-binding residues include Asp-91 and Asp-93. Residues Cys-106 and Cys-113 each coordinate Zn(2+).

Belongs to the PRA-CH family. Homodimer. The cofactor is Mg(2+). It depends on Zn(2+) as a cofactor.

The protein localises to the cytoplasm. The enzyme catalyses 1-(5-phospho-beta-D-ribosyl)-5'-AMP + H2O = 1-(5-phospho-beta-D-ribosyl)-5-[(5-phospho-beta-D-ribosylamino)methylideneamino]imidazole-4-carboxamide. The protein operates within amino-acid biosynthesis; L-histidine biosynthesis; L-histidine from 5-phospho-alpha-D-ribose 1-diphosphate: step 3/9. In terms of biological role, catalyzes the hydrolysis of the adenine ring of phosphoribosyl-AMP. The chain is Phosphoribosyl-AMP cyclohydrolase from Renibacterium salmoninarum (strain ATCC 33209 / DSM 20767 / JCM 11484 / NBRC 15589 / NCIMB 2235).